A 293-amino-acid polypeptide reads, in one-letter code: Bifunctional monothiol glutaredoxin-S16, chloroplastic (293 aa).

The transit peptide at 1–62 directs the protein to the chloroplast; it reads MAAITISSSL…APSRRRSFFI (62 aa). Cys123 and Cys219 are oxidised to a cystine. A Glutaredoxin domain is found at 194–293; sequence EELIDRLVKE…ENGELANILN (100 aa). Position 211 (Lys211) interacts with glutathione. [2Fe-2S] cluster is bound at residue Cys219. Glutathione contacts are provided by residues Arg251, Phe263, and 276 to 277; that span reads CD.

It belongs to the glutaredoxin family. CGFS subfamily. [2Fe-2S]-bridged holo-homodimer. Interacts in vitro with SUFE1, BOLA1, BOLA2 and BOLA4. Interacts in vivo only with SUFE1, BOLA1 and BOLA4. Interacts with SBP1.

Its subcellular location is the plastid. It localises to the chloroplast. The formation of an intramolecular disulfide bond negatively regulates both the N-terminal endonuclease and the C-terminal glutaredoxin activities. Its function is as follows. May only reduce GSH-thiol disulfides, but not protein disulfides. Participates probably to the maturation of iron-sulfur proteins and to the regulation of the redox state of the BOLA proteins. The GRXS16-BOLA1 heterodimer binds a labile, oxygen sensitive iron-sulfur cluster. Able to cleave linearized DNA in vitro. This Arabidopsis thaliana (Mouse-ear cress) protein is Bifunctional monothiol glutaredoxin-S16, chloroplastic.